We begin with the raw amino-acid sequence, 339 residues long: Methionine import ATP-binding protein MetN 2 (339 aa).

The region spanning 2-241 is the ABC transporter domain; it reads ISFNNVSKVY…PKTKTTQNFV (240 aa). 38 to 45 lines the ATP pocket; it reads GFSGAGKS.

It belongs to the ABC transporter superfamily. Methionine importer (TC 3.A.1.24) family. In terms of assembly, the complex is composed of two ATP-binding proteins (MetN), two transmembrane proteins (MetI) and a solute-binding protein (MetQ).

The protein localises to the cell membrane. It carries out the reaction L-methionine(out) + ATP + H2O = L-methionine(in) + ADP + phosphate + H(+). The catalysed reaction is D-methionine(out) + ATP + H2O = D-methionine(in) + ADP + phosphate + H(+). Its function is as follows. Part of the ABC transporter complex MetNIQ involved in methionine import. Responsible for energy coupling to the transport system. In Bacillus cereus (strain ATCC 10987 / NRS 248), this protein is Methionine import ATP-binding protein MetN 2.